We begin with the raw amino-acid sequence, 210 residues long: Orotate phosphoribosyltransferase (210 aa).

5-phospho-alpha-D-ribose 1-diphosphate is bound by residues Arg-94, Lys-98, His-100, and Glu-120–Ser-128. Residue Ser-124 coordinates orotate.

This sequence belongs to the purine/pyrimidine phosphoribosyltransferase family. PyrE subfamily. Homodimer. Mg(2+) serves as cofactor.

The catalysed reaction is orotidine 5'-phosphate + diphosphate = orotate + 5-phospho-alpha-D-ribose 1-diphosphate. Its pathway is pyrimidine metabolism; UMP biosynthesis via de novo pathway; UMP from orotate: step 1/2. Catalyzes the transfer of a ribosyl phosphate group from 5-phosphoribose 1-diphosphate to orotate, leading to the formation of orotidine monophosphate (OMP). In Bacillus cereus (strain G9842), this protein is Orotate phosphoribosyltransferase.